Here is a 331-residue protein sequence, read N- to C-terminus: Ribonuclease Z (331 aa).

H56, H58, D60, H61, H162, D235, and H297 together coordinate Zn(2+). D60 acts as the Proton acceptor in catalysis.

Belongs to the RNase Z family. In terms of assembly, homodimer. The cofactor is Zn(2+).

The enzyme catalyses Endonucleolytic cleavage of RNA, removing extra 3' nucleotides from tRNA precursor, generating 3' termini of tRNAs. A 3'-hydroxy group is left at the tRNA terminus and a 5'-phosphoryl group is left at the trailer molecule.. Its function is as follows. Zinc phosphodiesterase, which displays some tRNA 3'-processing endonuclease activity. Probably involved in tRNA maturation, by removing a 3'-trailer from precursor tRNA. The chain is Ribonuclease Z (rnz) from Deinococcus radiodurans (strain ATCC 13939 / DSM 20539 / JCM 16871 / CCUG 27074 / LMG 4051 / NBRC 15346 / NCIMB 9279 / VKM B-1422 / R1).